The chain runs to 556 residues: 2-succinyl-5-enolpyruvyl-6-hydroxy-3-cyclohexene-1-carboxylate synthase (556 aa).

This sequence belongs to the TPP enzyme family. MenD subfamily. In terms of assembly, homodimer. It depends on Mg(2+) as a cofactor. Mn(2+) is required as a cofactor. Requires thiamine diphosphate as cofactor.

The enzyme catalyses isochorismate + 2-oxoglutarate + H(+) = 5-enolpyruvoyl-6-hydroxy-2-succinyl-cyclohex-3-ene-1-carboxylate + CO2. It participates in quinol/quinone metabolism; 1,4-dihydroxy-2-naphthoate biosynthesis; 1,4-dihydroxy-2-naphthoate from chorismate: step 2/7. It functions in the pathway quinol/quinone metabolism; menaquinone biosynthesis. Catalyzes the thiamine diphosphate-dependent decarboxylation of 2-oxoglutarate and the subsequent addition of the resulting succinic semialdehyde-thiamine pyrophosphate anion to isochorismate to yield 2-succinyl-5-enolpyruvyl-6-hydroxy-3-cyclohexene-1-carboxylate (SEPHCHC). This is 2-succinyl-5-enolpyruvyl-6-hydroxy-3-cyclohexene-1-carboxylate synthase from Escherichia fergusonii (strain ATCC 35469 / DSM 13698 / CCUG 18766 / IAM 14443 / JCM 21226 / LMG 7866 / NBRC 102419 / NCTC 12128 / CDC 0568-73).